A 568-amino-acid chain; its full sequence is NADPH oxidase 3 (568 aa).

At 1-13 (MMGCWILNEGLST) the chain is on the cytoplasmic side. A helical membrane pass occupies residues 14–34 (ILVLSWLGINFYLFIDTFYWY). The Extracellular segment spans residues 35–51 (EEEESFHYTRVILGSTL). A helical membrane pass occupies residues 52–72 (AWARASALCLNFNCMLILIPV). Residues 55–284 (RASALCLNFN…VVLYACERII (230 aa)) enclose the Ferric oxidoreductase domain. The Cytoplasmic segment spans residues 73 to 103 (SRNLISFIRGTSICCRGPWRRQLDKNLRFHK). A helical transmembrane segment spans residues 104-124 (LVAYGIAVNATIHIVAHFFNL). At 125–167 (ERYHWSQSEEAQGLLAALSKLGNTPNESYLNPVRTFPTNTTTE) the chain is on the extracellular side. Asn-163 carries an N-linked (GlcNAc...) asparagine glycan. A helical membrane pass occupies residues 168 to 188 (LLRTIAGVTGLVISLALVLIM). The Cytoplasmic portion of the chain corresponds to 189 to 201 (TSSTEFIRQASYE). A helical membrane pass occupies residues 202–222 (LFWYTHHVFIVFFLSLAIHGT). At 223 to 395 (GRIVRGQTQD…DGPFGTALTD (173 aa)) the chain is on the extracellular side. N-linked (GlcNAc...) asparagine glycosylation is present at Asn-238. The region spanning 285–395 (RFWRFQQEVV…DGPFGTALTD (111 aa)) is the FAD-binding FR-type domain. A helical membrane pass occupies residues 396–416 (VFHYPVCVCVAAGIGVTPFAA). Over 417–568 (LLKSIWYKCS…VHFYYNKESF (152 aa)) the chain is Cytoplasmic.

As to quaternary structure, interacts with CYBA/p22phox. Heterodimerization with CYBA/p22phox is essential for its activity and cell membrane localization. Heme serves as cofactor. N-glycosylated in a CYBA/p22phox-dependent manner.

The protein localises to the cell membrane. It catalyses the reaction NADPH + 2 O2 = 2 superoxide + NADP(+) + H(+). Its activity is regulated as follows. Activated by the ototoxic drug cisplatin. Activated by NOXO1. Cooperatively activated by NCF1 and NCF2 or NOXA1 in a phorbol 12-myristate 13-acetate (PMA)-dependent manner. Inhibited by diphenyleneiodonium chloride. Functionally, NADPH oxidase that catalyzes the generation of superoxide from molecular oxygen utilizing NADPH as an electron donor, upon formation of a complex with CYBA/p22phox. Plays a role in the biogenesis of otoconia/otolith, which are crystalline structures of the inner ear involved in the perception of gravity. The sequence is that of NADPH oxidase 3 (NOX3) from Homo sapiens (Human).